Here is a 151-residue protein sequence, read N- to C-terminus: Large ribosomal subunit protein bL9 (151 aa).

This sequence belongs to the bacterial ribosomal protein bL9 family.

Binds to the 23S rRNA. This Thermosipho africanus (strain TCF52B) protein is Large ribosomal subunit protein bL9.